The chain runs to 156 residues: MGKQVEIFTDGSCLGNPGPGGYGVLLRYQQHEKTLSEGFYHTTNNRMELMAAIIGLETLTRPCKIVLTTDSQYVRQGITQWIHNWKKRGWRKADKSPVSNVDLWQRLDQAISRHNIDWQWVKGHAGHDENERCDELARAAANSPTETDTGYLENRD.

The region spanning 1–142 is the RNase H type-1 domain; that stretch reads MGKQVEIFTD…CDELARAAAN (142 aa). Mg(2+)-binding residues include Asp10, Glu48, Asp70, and Asp134.

This sequence belongs to the RNase H family. In terms of assembly, monomer. It depends on Mg(2+) as a cofactor.

The protein resides in the cytoplasm. It catalyses the reaction Endonucleolytic cleavage to 5'-phosphomonoester.. Functionally, endonuclease that specifically degrades the RNA of RNA-DNA hybrids. This chain is Ribonuclease H, found in Photorhabdus laumondii subsp. laumondii (strain DSM 15139 / CIP 105565 / TT01) (Photorhabdus luminescens subsp. laumondii).